The chain runs to 1093 residues: Protein transport protein Sec24A (1093 aa).

4 disordered regions span residues 1 to 29 (MSQP…SGSP), 60 to 168 (HPIP…TSLT), 189 to 226 (GPSV…ALTP), and 294 to 328 (SLPP…TQTP). Polar residues-rich tracts occupy residues 112-126 (ASQN…SSSF) and 138-168 (WQYN…TSLT). Pro residues-rich tracts occupy residues 191-201 (SVPPLVNPPLP) and 209-221 (PHGP…PPPV). The segment covering 299-328 (YQNTTPPGATGVPPSSLNYPSGPQAFTQTP) has biased composition (polar residues). Positions 431, 434, 452, and 455 each coordinate Zn(2+). A zinc finger-like region spans residues 431-455 (CRSCRTYINPFVSFLDQRRWKCNLC). The stretch at 966–1038 (PQPPILQLSV…TPESARIIAF (73 aa)) is one Gelsolin-like repeat.

It belongs to the SEC23/SEC24 family. SEC24 subfamily. In terms of assembly, COPII is composed of at least five proteins: the Sec23/24 complex, the Sec13/31 complex and Sar1. Interacts with TMED2. Interacts (as part of the Sec23/24 complex) with SEC22B; recruits SEC22B into COPII-coated vesicles for its transport from the endoplasmic reticulum to the Golgi. Interacts with STING1; promoting STING1 translocation to COPII vesicles in a STEEP1-dependent manner. Interacts with TMEM39A. Interacts with SACM1L; this interaction is reduced in the absence of TMEM39A. Interacts with kinase FAM20C; transport of FAM20C from the endoplasmic reticulum to the Golgi is likely to be mediated by COPII vesicles.

It localises to the cytoplasmic vesicle. It is found in the COPII-coated vesicle membrane. Its subcellular location is the endoplasmic reticulum membrane. The protein resides in the cytoplasm. The protein localises to the cytosol. Functionally, component of the coat protein complex II (COPII) which promotes the formation of transport vesicles from the endoplasmic reticulum (ER). The coat has two main functions, the physical deformation of the endoplasmic reticulum membrane into vesicles and the selection of cargo molecules for their transport to the Golgi complex. Plays a central role in cargo selection within the COPII complex and together with SEC24B may have a different specificity compared to SEC24C and SEC24D. May package preferentially cargos with cytoplasmic DxE or LxxLE motifs and may also recognize conformational epitopes. This Homo sapiens (Human) protein is Protein transport protein Sec24A.